We begin with the raw amino-acid sequence, 60 residues long: uncharacterized protein (60 aa).

The N-terminal stretch at 1–21 (MNKLLKLFFITIIIYNNIAFA) is a signal peptide.

This is an uncharacterized protein from Rickettsia prowazekii (strain Madrid E).